The following is a 550-amino-acid chain: Hydroxylamine reductase (550 aa).

Positions 3, 6, 18, and 25 each coordinate [2Fe-2S] cluster. Histidine 249, glutamate 273, cysteine 317, cysteine 405, cysteine 433, cysteine 458, glutamate 492, and lysine 494 together coordinate hybrid [4Fe-2O-2S] cluster. At cysteine 405 the chain carries Cysteine persulfide.

This sequence belongs to the HCP family. Requires [2Fe-2S] cluster as cofactor. The cofactor is hybrid [4Fe-2O-2S] cluster.

It is found in the cytoplasm. The catalysed reaction is A + NH4(+) + H2O = hydroxylamine + AH2 + H(+). In terms of biological role, catalyzes the reduction of hydroxylamine to form NH(3) and H(2)O. This chain is Hydroxylamine reductase, found in Salmonella dublin (strain CT_02021853).